Consider the following 447-residue polypeptide: Adenylosuccinate synthetase (447 aa).

Residues 12 to 18 (GDEGKGK) and 40 to 42 (GHT) contribute to the GTP site. The Proton acceptor role is filled by D13. Positions 13 and 40 each coordinate Mg(2+). IMP contacts are provided by residues 13-16 (DEGK), 38-41 (NAGH), T128, R142, Q223, T238, and R302. Residue H41 is the Proton donor of the active site. 298–304 (TTTGRKR) is a binding site for substrate. Residues R304, 330-332 (KLD), and 412-414 (SLG) contribute to the GTP site.

Belongs to the adenylosuccinate synthetase family. As to quaternary structure, homodimer. Mg(2+) is required as a cofactor.

The protein localises to the cytoplasm. The catalysed reaction is IMP + L-aspartate + GTP = N(6)-(1,2-dicarboxyethyl)-AMP + GDP + phosphate + 2 H(+). The protein operates within purine metabolism; AMP biosynthesis via de novo pathway; AMP from IMP: step 1/2. Functionally, plays an important role in the de novo pathway of purine nucleotide biosynthesis. Catalyzes the first committed step in the biosynthesis of AMP from IMP. The protein is Adenylosuccinate synthetase of Nostoc sp. (strain PCC 7120 / SAG 25.82 / UTEX 2576).